A 591-amino-acid chain; its full sequence is Metalloendopeptidase OPG085 (591 aa).

His41 contacts Zn(2+). Glu44 is an active-site residue. His45 is a Zn(2+) binding site.

The protein belongs to the peptidase M44 family. Requires Zn(2+) as cofactor. Undergoes proteolytic processing during the course of infection. May be cleaved into 46 kDa and 22 kDa products (Potential).

The protein localises to the virion. Its function is as follows. Probably involved in maturation of some viral proteins by processing them preferentially at Ala-Gly-|-Ser/Thr/Lys motifs. Does not seem to be responsible for the cleavage of major core proteins. This chain is Metalloendopeptidase OPG085 (OPG085), found in Homo sapiens (Human).